A 176-amino-acid polypeptide reads, in one-letter code: Ribosome maturation factor RimM (176 aa).

The PRC barrel domain occupies 97 to 176 (EDEFYWRDLI…QILVDWDPDF (80 aa)).

The protein belongs to the RimM family. As to quaternary structure, binds ribosomal protein uS19.

The protein resides in the cytoplasm. Its function is as follows. An accessory protein needed during the final step in the assembly of 30S ribosomal subunit, possibly for assembly of the head region. Essential for efficient processing of 16S rRNA. May be needed both before and after RbfA during the maturation of 16S rRNA. It has affinity for free ribosomal 30S subunits but not for 70S ribosomes. The protein is Ribosome maturation factor RimM of Shewanella sp. (strain ANA-3).